Here is a 256-residue protein sequence, read N- to C-terminus: Triosephosphate isomerase (256 aa).

Residue 10–12 coordinates substrate; sequence NWK. The Electrophile role is filled by His-97. Residue Glu-169 is the Proton acceptor of the active site. Substrate-binding positions include Gly-175, Ser-214, and 235 to 236; that span reads GG.

Belongs to the triosephosphate isomerase family. In terms of assembly, homodimer.

The protein localises to the cytoplasm. It carries out the reaction D-glyceraldehyde 3-phosphate = dihydroxyacetone phosphate. The protein operates within carbohydrate biosynthesis; gluconeogenesis. It participates in carbohydrate degradation; glycolysis; D-glyceraldehyde 3-phosphate from glycerone phosphate: step 1/1. Its function is as follows. Involved in the gluconeogenesis. Catalyzes stereospecifically the conversion of dihydroxyacetone phosphate (DHAP) to D-glyceraldehyde-3-phosphate (G3P). This chain is Triosephosphate isomerase, found in Haemophilus ducreyi (strain 35000HP / ATCC 700724).